The sequence spans 397 residues: Probable protein phosphatase 2C 74 (397 aa).

In terms of domain architecture, PPM-type phosphatase spans 133-391; sequence GFWVASRRGL…DDVTVMVVDL (259 aa). 4 residues coordinate Mn(2+): aspartate 170, glycine 171, aspartate 343, and aspartate 382.

It belongs to the PP2C family. It depends on Mg(2+) as a cofactor. The cofactor is Mn(2+).

The enzyme catalyses O-phospho-L-seryl-[protein] + H2O = L-seryl-[protein] + phosphate. It carries out the reaction O-phospho-L-threonyl-[protein] + H2O = L-threonyl-[protein] + phosphate. In Oryza sativa subsp. japonica (Rice), this protein is Probable protein phosphatase 2C 74.